A 489-amino-acid chain; its full sequence is Rhamnulokinase (489 aa).

13 to 17 (ASSGR) is a binding site for ATP. Cys-68 and Cys-222 are joined by a disulfide. Substrate-binding positions include Gly-83 and 236–238 (HDT). Asp-237 functions as the Proton acceptor in the catalytic mechanism. Thr-259 lines the ATP pocket. Asn-296 is a substrate binding site. Gln-304 serves as a coordination point for ATP. A disulfide bond links Cys-353 and Cys-370. Gly-402 provides a ligand contact to ATP. Residues Cys-413 and Cys-417 are joined by a disulfide bond.

This sequence belongs to the rhamnulokinase family. Mg(2+) is required as a cofactor.

It carries out the reaction L-rhamnulose + ATP = L-rhamnulose 1-phosphate + ADP + H(+). It participates in carbohydrate degradation; L-rhamnose degradation; glycerone phosphate from L-rhamnose: step 2/3. Functionally, involved in the catabolism of L-rhamnose (6-deoxy-L-mannose). Catalyzes the transfer of the gamma-phosphate group from ATP to the 1-hydroxyl group of L-rhamnulose to yield L-rhamnulose 1-phosphate. In Salmonella paratyphi A (strain AKU_12601), this protein is Rhamnulokinase.